Reading from the N-terminus, the 590-residue chain is Acetylcholinesterase (590 aa).

The signal sequence occupies residues 1-24 (MREMNLLVTSSLGVLLHLVVLCQA). Asparagine 83 carries N-linked (GlcNAc...) asparagine glycosylation. A disulfide bond links cysteine 91 and cysteine 118. The Acyl-ester intermediate role is filled by serine 224. Residues cysteine 278 and cysteine 289 are joined by a disulfide bond. Glutamate 351 serves as the catalytic Charge relay system. A disulfide bond links cysteine 426 and cysteine 545. The N-linked (GlcNAc...) asparagine glycan is linked to asparagine 440. The active-site Charge relay system is histidine 464. Asparagine 481 and asparagine 557 each carry an N-linked (GlcNAc...) asparagine glycan. The GPI-anchor amidated serine moiety is linked to residue serine 567. A propeptide spans 568–590 (SGTSSSKGIIFYVLFSILYLIFY) (removed in mature form).

It belongs to the type-B carboxylesterase/lipase family. In terms of assembly, isoform H form is a homodimer; the asymmetric form is a disulfide-bonded oligomer composed of a collagenic subunit (Q) and a variable number of T catalytic subunits. An interchain disulfide bond is present in what becomes position 596 of the T isoform. In terms of tissue distribution, found in the synapses and to a lower extent in extrajunctional areas of muscle and nerve, and on erythrocyte membranes.

It is found in the cell membrane. It localises to the synapse. The enzyme catalyses acetylcholine + H2O = choline + acetate + H(+). In terms of biological role, terminates signal transduction at the neuromuscular junction by rapid hydrolysis of the acetylcholine released into the synaptic cleft. May be involved in cell-cell interactions. This is Acetylcholinesterase (ache) from Torpedo marmorata (Marbled electric ray).